We begin with the raw amino-acid sequence, 353 residues long: Biotin synthase (353 aa).

A compositionally biased stretch (low complexity) spans 1-22 (MTACSTTPTTSATSAQPAAGSP). The disordered stretch occupies residues 1–30 (MTACSTTPTTSATSAQPAAGSPLQWHARPS). In terms of domain architecture, Radical SAM core spans 72–299 (GDIELATLLS…TARVRLSAGR (228 aa)). 3 residues coordinate [4Fe-4S] cluster: cysteine 87, cysteine 91, and cysteine 94. Positions 131, 162, 222, and 294 each coordinate [2Fe-2S] cluster.

It belongs to the radical SAM superfamily. Biotin synthase family. Homodimer. The cofactor is [4Fe-4S] cluster. It depends on [2Fe-2S] cluster as a cofactor.

It carries out the reaction (4R,5S)-dethiobiotin + (sulfur carrier)-SH + 2 reduced [2Fe-2S]-[ferredoxin] + 2 S-adenosyl-L-methionine = (sulfur carrier)-H + biotin + 2 5'-deoxyadenosine + 2 L-methionine + 2 oxidized [2Fe-2S]-[ferredoxin]. It functions in the pathway cofactor biosynthesis; biotin biosynthesis; biotin from 7,8-diaminononanoate: step 2/2. Its function is as follows. Catalyzes the conversion of dethiobiotin (DTB) to biotin by the insertion of a sulfur atom into dethiobiotin via a radical-based mechanism. The protein is Biotin synthase of Delftia acidovorans (strain DSM 14801 / SPH-1).